The following is a 687-amino-acid chain: CWF19-like protein 2 homolog (687 aa).

A coiled-coil region spans residues 6–51 (FESGREKDKARQELREAREAMLQQAKERAELRGQRERQKELRGEAD). The segment covering 24-50 (EAMLQQAKERAELRGQRERQKELRGEA) has biased composition (basic and acidic residues). The segment at 24-281 (EAMLQQAKER…PKSRPSCLTD (258 aa)) is disordered. The span at 66–92 (KKSKKNVSKHKSRSKSKSSKKSRKHRN) shows a compositional bias: basic residues. Residues 93–107 (SSSSSESSTSSSSSF) show a composition bias toward low complexity. A coiled-coil region spans residues 108–131 (SEDEKERKRRKKKSKRSRKESASE). Positions 114-125 (RKRRKKKSKRSR) are enriched in basic residues. Phosphoserine occurs at positions 128 and 130. Composition is skewed to basic and acidic residues over residues 146-157 (VTKKEPPQRDDW) and 168-180 (FSRERKEPAKPNE). The stretch at 290–325 (KAIKAELKGKKELAAELNQQLEAARKERAEFIASGE) forms a coiled coil. Residues 355–383 (VRPLVQSGDPNESYGGRMGPKRGSKKVDT) form a disordered region. Residues 444-475 (KQISASDAEKREMQSAIREHEKLVATLDNCER) are a coiled coil.

Belongs to the CWF19 family.

The sequence is that of CWF19-like protein 2 homolog from Drosophila melanogaster (Fruit fly).